The following is a 524-amino-acid chain: Histidine ammonia-lyase (524 aa).

The segment at residues 139 to 141 is a cross-link (5-imidazolinone (Ala-Gly)); it reads ASG. The residue at position 140 (S140) is a 2,3-didehydroalanine (Ser). Residues 500–524 form a disordered region; it reads ADTQAPAPAKLPDSGDEDRDTTSRH.

It belongs to the PAL/histidase family. In terms of processing, contains an active site 4-methylidene-imidazol-5-one (MIO), which is formed autocatalytically by cyclization and dehydration of residues Ala-Ser-Gly.

Its subcellular location is the cytoplasm. The enzyme catalyses L-histidine = trans-urocanate + NH4(+). It functions in the pathway amino-acid degradation; L-histidine degradation into L-glutamate; N-formimidoyl-L-glutamate from L-histidine: step 1/3. This is Histidine ammonia-lyase (hutH) from Deinococcus radiodurans (strain ATCC 13939 / DSM 20539 / JCM 16871 / CCUG 27074 / LMG 4051 / NBRC 15346 / NCIMB 9279 / VKM B-1422 / R1).